The primary structure comprises 508 residues: Photosystem II CP47 reaction center protein (508 aa).

The next 6 helical transmembrane spans lie at 21–36 (SVHIMHTALVAGWAGS), 101–115 (IVFSGLCFLAAIWHW), 140–156 (GIHLFLSGVACFGFGAF), 203–218 (IAAGTLGILAGLFHLS), 237–252 (VLSSSIAAVFFAAFVV), and 457–472 (SFALLFFFGHIWHGAR).

Belongs to the PsbB/PsbC family. PsbB subfamily. PSII is composed of 1 copy each of membrane proteins PsbA, PsbB, PsbC, PsbD, PsbE, PsbF, PsbH, PsbI, PsbJ, PsbK, PsbL, PsbM, PsbT, PsbX, PsbY, PsbZ, Psb30/Ycf12, at least 3 peripheral proteins of the oxygen-evolving complex and a large number of cofactors. It forms dimeric complexes. It depends on Binds multiple chlorophylls. PSII binds additional chlorophylls, carotenoids and specific lipids. as a cofactor.

Its subcellular location is the plastid. It localises to the chloroplast thylakoid membrane. Its function is as follows. One of the components of the core complex of photosystem II (PSII). It binds chlorophyll and helps catalyze the primary light-induced photochemical processes of PSII. PSII is a light-driven water:plastoquinone oxidoreductase, using light energy to abstract electrons from H(2)O, generating O(2) and a proton gradient subsequently used for ATP formation. The sequence is that of Photosystem II CP47 reaction center protein from Barbarea verna (Land cress).